The sequence spans 121 residues: Spindle and kinetochore-associated protein 2 (121 aa).

Serine 101 bears the Phosphoserine mark.

This sequence belongs to the SKA2 family. Component of the SKA1 complex, composed of SKA1, SKA2 and SKA3. Forms a heterodimer with SKA1; the heterodimer interacting with SKA3. The core SKA1 complex is composed of 2 SKA1-SKA2 heterodimers, each heterodimer interacting with a molecule of the SKA3 homodimer. The core SKA1 complex associates with microtubules and forms oligomeric assemblies. Interacts directly with SKA1. Binds directly to microtubules; but with a much lower affinity than SKA1. May interact with NR3C1; the relevance of such interaction remains unclear in vivo.

The protein resides in the cytoplasm. The protein localises to the cytoskeleton. It is found in the spindle. It localises to the chromosome. Its subcellular location is the centromere. The protein resides in the kinetochore. Component of the SKA1 complex, a microtubule-binding subcomplex of the outer kinetochore that is essential for proper chromosome segregation. Required for timely anaphase onset during mitosis, when chromosomes undergo bipolar attachment on spindle microtubules leading to silencing of the spindle checkpoint. The SKA1 complex is a direct component of the kinetochore-microtubule interface and directly associates with microtubules as oligomeric assemblies. The complex facilitates the processive movement of microspheres along a microtubule in a depolymerization-coupled manner. In the complex, it is required for SKA1 localization. Affinity for microtubules is synergistically enhanced in the presence of the ndc-80 complex and may allow the ndc-80 complex to track depolymerizing microtubules. This is Spindle and kinetochore-associated protein 2 (SKA2) from Homo sapiens (Human).